The primary structure comprises 311 residues: Methionyl-tRNA formyltransferase (311 aa).

Position 109–112 (109–112) interacts with (6S)-5,6,7,8-tetrahydrofolate; sequence SLLP.

The protein belongs to the Fmt family.

It catalyses the reaction L-methionyl-tRNA(fMet) + (6R)-10-formyltetrahydrofolate = N-formyl-L-methionyl-tRNA(fMet) + (6S)-5,6,7,8-tetrahydrofolate + H(+). Attaches a formyl group to the free amino group of methionyl-tRNA(fMet). The formyl group appears to play a dual role in the initiator identity of N-formylmethionyl-tRNA by promoting its recognition by IF2 and preventing the misappropriation of this tRNA by the elongation apparatus. In Moorella thermoacetica (strain ATCC 39073 / JCM 9320), this protein is Methionyl-tRNA formyltransferase.